The chain runs to 192 residues: uncharacterized protein (192 aa).

The protein localises to the virion. This is an uncharacterized protein from Acanthamoeba polyphaga mimivirus (APMV).